Consider the following 320-residue polypeptide: Aspartate carbamoyltransferase catalytic subunit (320 aa).

2 residues coordinate carbamoyl phosphate: arginine 68 and threonine 69. Lysine 96 lines the L-aspartate pocket. Carbamoyl phosphate is bound by residues arginine 118, histidine 148, and glutamine 151. 2 residues coordinate L-aspartate: arginine 181 and arginine 236. Positions 277 and 278 each coordinate carbamoyl phosphate.

The protein belongs to the aspartate/ornithine carbamoyltransferase superfamily. ATCase family. Heterododecamer (2C3:3R2) of six catalytic PyrB chains organized as two trimers (C3), and six regulatory PyrI chains organized as three dimers (R2).

The catalysed reaction is carbamoyl phosphate + L-aspartate = N-carbamoyl-L-aspartate + phosphate + H(+). Its pathway is pyrimidine metabolism; UMP biosynthesis via de novo pathway; (S)-dihydroorotate from bicarbonate: step 2/3. In terms of biological role, catalyzes the condensation of carbamoyl phosphate and aspartate to form carbamoyl aspartate and inorganic phosphate, the committed step in the de novo pyrimidine nucleotide biosynthesis pathway. The protein is Aspartate carbamoyltransferase catalytic subunit of Paracidovorax citrulli (strain AAC00-1) (Acidovorax citrulli).